Consider the following 89-residue polypeptide: MTLANIKSAKKRAIQSEKRRQHNASQRSMMRTYIKKVYAAVAAGDKSVAEKAFVEMQKVVDRMASKGLIHANKAANHKANLSAQIKKLA.

The disordered stretch occupies residues 1 to 28 (MTLANIKSAKKRAIQSEKRRQHNASQRS).

This sequence belongs to the bacterial ribosomal protein bS20 family.

Its function is as follows. Binds directly to 16S ribosomal RNA. The polypeptide is Small ribosomal subunit protein bS20 (Pasteurella multocida (strain Pm70)).